We begin with the raw amino-acid sequence, 332 residues long: Cysteine and histidine-rich domain-containing protein 1 (332 aa).

Residue Ala-2 is modified to N-acetylalanine. The tract at residues 2-77 (ALLCYNRGCG…KPPEPVKPEV (76 aa)) is interaction with PPP5C. Zn(2+)-binding residues include Cys-5, Cys-10, Cys-24, His-27, Cys-42, and Cys-43. CHORD domains are found at residues 5-64 (CYNR…KGRH) and 157-216 (CKNG…KGKH). Phosphothreonine is present on Thr-47. Ser-51 is modified (phosphoserine). Residues Cys-59, His-64, Cys-157, Cys-162, Cys-176, His-179, Cys-194, Cys-195, Cys-211, and His-216 each contribute to the Zn(2+) site. Residues 65-316 (NSEKPPEPVK…AEPMQWASLE (252 aa)) are interaction with HSP90AA1 and HSP90AB1. In terms of domain architecture, CS spans 227-316 (VVPCRHDWHQ…AEPMQWASLE (90 aa)).

Interacts with HSP90AA1, ROCK1 and ROCK2. Interacts with HSP90AB1 and PPP5C. Underexpressed in many breast and lung cancers.

Regulates centrosome duplication, probably by inhibiting the kinase activity of ROCK2. Proposed to act as co-chaperone for HSP90. May play a role in the regulation of NOD1 via a HSP90 chaperone complex. In vitro, has intrinsic chaperone activity. This function may be achieved by inhibiting association of ROCK2 with NPM1. Plays a role in ensuring the localization of the tyrosine kinase receptor EGFR to the plasma membrane, and thus ensures the subsequent regulation of EGFR activity and EGF-induced actin cytoskeleton remodeling. Involved in stress response. Prevents tumorigenesis. The sequence is that of Cysteine and histidine-rich domain-containing protein 1 (CHORDC1) from Homo sapiens (Human).